We begin with the raw amino-acid sequence, 101 residues long: Small ribosomal subunit protein bS16 (101 aa).

This sequence belongs to the bacterial ribosomal protein bS16 family.

This is Small ribosomal subunit protein bS16 from Ureaplasma urealyticum serovar 10 (strain ATCC 33699 / Western).